A 252-amino-acid polypeptide reads, in one-letter code: PHD finger protein ALFIN-LIKE 7 (252 aa).

The tract at residues 141 to 193 (AKQSKDQSANHNSSRSKSSGGKPRHSESHTKASKMSPPPRKEDESGDEDEDDE) is disordered. Over residues 149 to 161 (ANHNSSRSKSSGG) the composition is skewed to low complexity. Residue Ser-176 is modified to Phosphoserine. The span at 184–193 (ESGDEDEDDE) shows a compositional bias: acidic residues. The segment at 195-247 (GAVCGACGDNYGGDEFWICCDACEKWFHGKCVKITPAKAEHIKHYKCPSCTTS) adopts a PHD-type zinc-finger fold.

It belongs to the Alfin family. As to quaternary structure, interacts with H3K4me3 and to a lesser extent with H3K4me2. As to expression, ubiquitously expressed.

The protein resides in the nucleus. Histone-binding component that specifically recognizes H3 tails trimethylated on 'Lys-4' (H3K4me3), which mark transcription start sites of virtually all active genes. This chain is PHD finger protein ALFIN-LIKE 7 (AL7), found in Arabidopsis thaliana (Mouse-ear cress).